Here is a 758-residue protein sequence, read N- to C-terminus: POU domain, class 2, transcription factor 1 (758 aa).

Composition is skewed to polar residues over residues M1 to Q10, R19 to P30, and V275 to P285. Disordered regions lie at residues M1–G43, A271–P296, T377–K398, E450–S472, and S534–S573. One can recognise a POU-specific domain in the interval E294–E368. The homeobox DNA-binding region spans R395–N454. Low complexity predominate over residues P455 to S472.

It belongs to the POU transcription factor family. Class-2 subfamily. In terms of tissue distribution, expressed in oocytes (at protein level). Expressed in the tadpole brain (at protein level).

It is found in the cytoplasm. Its subcellular location is the nucleus. Transcription factor that binds to the octamer motif (5'-ATTTGCAT-3') and activates the promoters of the genes of some small nuclear RNAs (snRNA) and histone H2B. In vitro does not bind to variant octamer sequences, such as the H2B octamer 5'-GTTTGCAT-3', although binding has been observed in vivo during early embryogenesis, suggesting that interactions between pou2f1 and other factors might be required for octamer-dependent H2B transcription. Acts downstream of Notch signaling during radial glia formation. May be important for gastrulation, possibly through the regulation of an FGF-type signaling pathway. In Xenopus laevis (African clawed frog), this protein is POU domain, class 2, transcription factor 1 (pou2f1).